An 829-amino-acid chain; its full sequence is Periplasmic nitrate reductase (829 aa).

The tat-type signal signal peptide spans 1-36 (MARRDFIKQTAAAAAATVAGVPLTGYTQNIVTESEA). One can recognise a 4Fe-4S Mo/W bis-MGD-type domain in the interval 39–95 (LKWSKAPCRFCGTGCGVNVAVKDNQVVATHGDFNAEVNKGLNCVKGYFLSKIMYGSD). Residues C46, C49, C53, and C81 each coordinate [4Fe-4S] cluster. Residues K83, Q150, N175, C179, 212-219 (WGSNMAEM), 243-247 (STFEH), 262-264 (QSD), M373, Q377, N483, 509-510 (SD), K532, D559, and 719-728 (TGRVLEHWHS) contribute to the Mo-bis(molybdopterin guanine dinucleotide) site. Residue W795 coordinates substrate. Mo-bis(molybdopterin guanine dinucleotide) contacts are provided by N803 and K820.

Belongs to the prokaryotic molybdopterin-containing oxidoreductase family. NasA/NapA/NarB subfamily. Component of the periplasmic nitrate reductase NapAB complex composed of NapA and NapB. The cofactor is [4Fe-4S] cluster. Mo-bis(molybdopterin guanine dinucleotide) is required as a cofactor. Predicted to be exported by the Tat system. The position of the signal peptide cleavage has not been experimentally proven.

It localises to the periplasm. It carries out the reaction 2 Fe(II)-[cytochrome] + nitrate + 2 H(+) = 2 Fe(III)-[cytochrome] + nitrite + H2O. Catalytic subunit of the periplasmic nitrate reductase complex NapAB. Receives electrons from NapB and catalyzes the reduction of nitrate to nitrite. The polypeptide is Periplasmic nitrate reductase (Bordetella bronchiseptica (strain ATCC BAA-588 / NCTC 13252 / RB50) (Alcaligenes bronchisepticus)).